We begin with the raw amino-acid sequence, 484 residues long: Nuclear rim protein 1 (484 aa).

Phosphoserine is present on Ser3. The next 2 helical transmembrane spans lie at 145–165 and 252–272; these read FTIF…MFGY and TAIV…AIVF. Positions 416 to 457 are disordered; sequence SSNENLEKGGAFLPNQDQNRPSKSLSPLRKTPLSARQKRFEG. A Phosphoserine modification is found at Ser417. A compositionally biased stretch (polar residues) spans 430–440; that stretch reads NQDQNRPSKSL. Ser474 carries the post-translational modification Phosphoserine.

Belongs to the NUR1 family. In terms of assembly, interacts with CSM1.

The protein localises to the nucleus membrane. Functionally, member of a perinuclear network that controls recombination at multiple loci to maintain genome stability. Required for rDNA repeat stability. This Saccharomyces cerevisiae (strain Lalvin EC1118 / Prise de mousse) (Baker's yeast) protein is Nuclear rim protein 1 (NUR1).